Here is a 175-residue protein sequence, read N- to C-terminus: Sec-independent protein translocase protein TatB (175 aa).

Residues 1-21 (MLDLGLTKMALIGVVALVVLG) form a helical membrane-spanning segment. 2 disordered regions span residues 104-132 (GGAL…RKNW) and 155-175 (SGAA…TRFF).

It belongs to the TatB family. As to quaternary structure, the Tat system comprises two distinct complexes: a TatABC complex, containing multiple copies of TatA, TatB and TatC subunits, and a separate TatA complex, containing only TatA subunits. Substrates initially bind to the TatABC complex, which probably triggers association of the separate TatA complex to form the active translocon.

The protein resides in the cell inner membrane. In terms of biological role, part of the twin-arginine translocation (Tat) system that transports large folded proteins containing a characteristic twin-arginine motif in their signal peptide across membranes. Together with TatC, TatB is part of a receptor directly interacting with Tat signal peptides. TatB may form an oligomeric binding site that transiently accommodates folded Tat precursor proteins before their translocation. In Paraburkholderia xenovorans (strain LB400), this protein is Sec-independent protein translocase protein TatB.